A 211-amino-acid chain; its full sequence is Pyridoxine/pyridoxamine 5'-phosphate oxidase (211 aa).

Substrate is bound by residues 7 to 10 (RREY) and lysine 65. FMN is bound by residues 60-65 (RIVLLK), 75-76 (YT), arginine 81, lysine 82, and glutamine 104. Residues tyrosine 122, arginine 126, and serine 130 each contribute to the substrate site. Residues 139-140 (QS) and tryptophan 184 each bind FMN. Position 190-192 (190-192 (RLH)) interacts with substrate. Arginine 194 provides a ligand contact to FMN.

It belongs to the pyridoxamine 5'-phosphate oxidase family. In terms of assembly, homodimer. The cofactor is FMN.

The enzyme catalyses pyridoxamine 5'-phosphate + O2 + H2O = pyridoxal 5'-phosphate + H2O2 + NH4(+). It catalyses the reaction pyridoxine 5'-phosphate + O2 = pyridoxal 5'-phosphate + H2O2. The protein operates within cofactor metabolism; pyridoxal 5'-phosphate salvage; pyridoxal 5'-phosphate from pyridoxamine 5'-phosphate: step 1/1. Its pathway is cofactor metabolism; pyridoxal 5'-phosphate salvage; pyridoxal 5'-phosphate from pyridoxine 5'-phosphate: step 1/1. Its function is as follows. Catalyzes the oxidation of either pyridoxine 5'-phosphate (PNP) or pyridoxamine 5'-phosphate (PMP) into pyridoxal 5'-phosphate (PLP). The protein is Pyridoxine/pyridoxamine 5'-phosphate oxidase of Vibrio vulnificus (strain CMCP6).